Reading from the N-terminus, the 949-residue chain is Copper-transporting ATPase PAA1, chloroplastic (949 aa).

A chloroplast-targeting transit peptide spans 1–103 (MESTLSAFST…SSSPSFRSIS (103 aa)). Positions 113 to 126 (YNGGSGGGGGGGSE) are enriched in gly residues. A disordered region spans residues 113–142 (YNGGSGGGGGGGSESGDSKSKLGANASDGV). The 75-residue stretch at 148-222 (DIIILDVGGM…HLTNCGFQST (75 aa)) folds into the HMA domain. 2 residues coordinate Cu(+): C159 and C162. 6 helical membrane passes run 253–274 (LAVS…FLGV), 287–306 (FHVS…LVLD), 314–334 (GSPN…SVSS), 349–369 (EEPV…QRAK), 502–524 (VAGR…WNLF), and 543–560 (LQLS…ALGL). Catalysis depends on D598, which acts as the 4-aspartylphosphate intermediate. 807–814 (GDGINDAA) is a binding site for ATP. Positions 808 and 812 each coordinate Mg(2+). 2 consecutive transmembrane segments (helical) span residues 863-882 (KQNL…IAAG) and 895-913 (SMAG…TNSL). The segment at 925 to 949 (DKNVKPEPKEGTKQPHENTRWKQSS) is disordered.

It belongs to the cation transport ATPase (P-type) (TC 3.A.3) family. Type IB subfamily. Expressed in the shoots and roots.

The protein localises to the plastid. Its subcellular location is the chloroplast membrane. It carries out the reaction Cu(+)(in) + ATP + H2O = Cu(+)(out) + ADP + phosphate + H(+). Mediates copper transfer across the plastid envelope. Required for the delivery of copper into the plastid stroma, which is essential for the function of copper proteins. Seems to be selective for monovalent copper Cu(+) transport. Also plays a role in glucose signaling-mediated cell proliferation of root meristem in non-green tissues. The polypeptide is Copper-transporting ATPase PAA1, chloroplastic (PAA1) (Arabidopsis thaliana (Mouse-ear cress)).